The chain runs to 84 residues: Chymotrypsin inhibitor Ani s 6 (84 aa).

The N-terminal stretch at 1–22 is a signal peptide; the sequence is MFQSTFFLVLMVCVATARFANK. 5 disulfide bridges follow: Cys-25–Cys-58, Cys-34–Cys-54, Cys-38–Cys-50, Cys-42–Cys-79, and Cys-60–Cys-73. The region spanning 25 to 79 is the TIL domain; the sequence is CPPNEEYNECGNPCQEKCDNGEPVICTYQCEHRCFCKQGYVRLTEDGECVPEEFC.

This sequence belongs to the serine protease inhibitor-like (TIL domain-containing) family.

It is found in the secreted. Functionally, inhibits alpha-chymotrypsin, but not trypsin. This Anisakis simplex (Herring worm) protein is Chymotrypsin inhibitor Ani s 6.